Here is a 179-residue protein sequence, read N- to C-terminus: IMPACT family member in pol 5'region (179 aa).

The protein belongs to the IMPACT family.

The polypeptide is IMPACT family member in pol 5'region (Thermus thermophilus).